A 755-amino-acid chain; its full sequence is Polyribonucleotide nucleotidyltransferase (755 aa).

Mg(2+) contacts are provided by Asp493 and Asp499. Residues 560–619 form the KH domain; sequence PRIMTIQIPVDKIGALIGPGGKTIRNICDTTGAQIDIEDDGRVFITAPDGEAAKKAISMI. Residues 629 to 698 form the S1 motif domain; the sequence is GDIFLGKVVS…NTGKISLSRR (70 aa). Residues 704–755 are disordered; the sequence is ETPEARKAAGAAPRPRPREEQRGGREEPRSLREELRGPRRDGERPRPRRRDD. A compositionally biased stretch (basic and acidic residues) spans 719–755; it reads RPREEQRGGREEPRSLREELRGPRRDGERPRPRRRDD.

Belongs to the polyribonucleotide nucleotidyltransferase family. Requires Mg(2+) as cofactor.

It localises to the cytoplasm. The catalysed reaction is RNA(n+1) + phosphate = RNA(n) + a ribonucleoside 5'-diphosphate. Involved in mRNA degradation. Catalyzes the phosphorolysis of single-stranded polyribonucleotides processively in the 3'- to 5'-direction. This is Polyribonucleotide nucleotidyltransferase from Chloroflexus aggregans (strain MD-66 / DSM 9485).